The following is a 214-amino-acid chain: Pyridoxine/pyridoxamine 5'-phosphate oxidase (214 aa).

Residues 8–11 and lysine 66 each bind substrate; that span reads RINY. FMN is bound by residues 61-66, 76-77, arginine 82, lysine 83, and glutamine 105; these read RIVLIK and FT. 3 residues coordinate substrate: tyrosine 123, arginine 127, and serine 131. Residues 140–141 and tryptophan 184 each bind FMN; that span reads QS. Substrate is bound at residue 190-192; the sequence is RLH. Arginine 194 provides a ligand contact to FMN.

Belongs to the pyridoxamine 5'-phosphate oxidase family. In terms of assembly, homodimer. It depends on FMN as a cofactor.

The catalysed reaction is pyridoxamine 5'-phosphate + O2 + H2O = pyridoxal 5'-phosphate + H2O2 + NH4(+). The enzyme catalyses pyridoxine 5'-phosphate + O2 = pyridoxal 5'-phosphate + H2O2. It participates in cofactor metabolism; pyridoxal 5'-phosphate salvage; pyridoxal 5'-phosphate from pyridoxamine 5'-phosphate: step 1/1. Its pathway is cofactor metabolism; pyridoxal 5'-phosphate salvage; pyridoxal 5'-phosphate from pyridoxine 5'-phosphate: step 1/1. Catalyzes the oxidation of either pyridoxine 5'-phosphate (PNP) or pyridoxamine 5'-phosphate (PMP) into pyridoxal 5'-phosphate (PLP). The sequence is that of Pyridoxine/pyridoxamine 5'-phosphate oxidase from Burkholderia ambifaria (strain ATCC BAA-244 / DSM 16087 / CCUG 44356 / LMG 19182 / AMMD) (Burkholderia cepacia (strain AMMD)).